Here is a 448-residue protein sequence, read N- to C-terminus: Methylenetetrahydrofolate--tRNA-(uracil-5-)-methyltransferase TrmFO (448 aa).

FAD is bound at residue 13–18; that stretch reads GAGLAG.

Belongs to the MnmG family. TrmFO subfamily. It depends on FAD as a cofactor.

It localises to the cytoplasm. The catalysed reaction is uridine(54) in tRNA + (6R)-5,10-methylene-5,6,7,8-tetrahydrofolate + NADH + H(+) = 5-methyluridine(54) in tRNA + (6S)-5,6,7,8-tetrahydrofolate + NAD(+). It catalyses the reaction uridine(54) in tRNA + (6R)-5,10-methylene-5,6,7,8-tetrahydrofolate + NADPH + H(+) = 5-methyluridine(54) in tRNA + (6S)-5,6,7,8-tetrahydrofolate + NADP(+). Its function is as follows. Catalyzes the folate-dependent formation of 5-methyl-uridine at position 54 (M-5-U54) in all tRNAs. This is Methylenetetrahydrofolate--tRNA-(uracil-5-)-methyltransferase TrmFO from Streptococcus pyogenes serotype M28 (strain MGAS6180).